A 293-amino-acid chain; its full sequence is Excinuclease cho (293 aa).

The 76-residue stretch at 33-108 folds into the GIY-YIG domain; sequence ALPGVYIFHS…IKEQQPLFNK (76 aa).

In terms of biological role, incises the DNA at the 3' side of a lesion during nucleotide excision repair. Incises the DNA farther away from the lesion than UvrC. Not able to incise the 5' site of a lesion. When a lesion remains because UvrC is not able to induce the 3' incision, Cho incises the DNA. Then UvrC makes the 5' incision. The combined action of Cho and UvrC broadens the substrate range of nucleotide excision repair. The protein is Excinuclease cho (cho) of Salmonella typhimurium (strain LT2 / SGSC1412 / ATCC 700720).